The chain runs to 415 residues: Peptide chain release factor subunit 1 (415 aa).

This sequence belongs to the eukaryotic release factor 1 family. Heterodimer of two subunits, one of which binds GTP.

It is found in the cytoplasm. Directs the termination of nascent peptide synthesis (translation) in response to the termination codons UAA, UAG and UGA. This chain is Peptide chain release factor subunit 1, found in Thermococcus onnurineus (strain NA1).